We begin with the raw amino-acid sequence, 391 residues long: Multidrug resistance protein MdtL (391 aa).

A run of 12 helical transmembrane segments spans residues 4–24 (FLIC…MYLV), 42–62 (IAFS…GKVA), 69–89 (PVAI…SLAE), 93–113 (LFLA…VVAF), 131–151 (LLNG…HLIM), 158–178 (SLFW…LFIL), 203–222 (FFLS…LTFV), 245–265 (ALTA…LGIF), 269–289 (TLMI…AVSP), 293–313 (VSLF…GVAM), 331–351 (LGIA…VVGI), and 356–376 (MLIG…MFVA).

Belongs to the major facilitator superfamily. DHA1 family. MdtL (TC 2.A.1.2.22) subfamily.

Its subcellular location is the cell inner membrane. Its function is as follows. Confers resistance to chloramphenicol. This Escherichia coli O17:K52:H18 (strain UMN026 / ExPEC) protein is Multidrug resistance protein MdtL.